The sequence spans 297 residues: uncharacterized protein (297 aa).

4 disordered regions span residues 12–43, 65–85, 122–151, and 265–297; these read QNNN…TNDN, VPNS…DKPI, KVST…TNET, and SRLS…DQNN. The span at 65-79 shows a compositional bias: polar residues; the sequence is VPNSINVNTSSSGNK. Low complexity predominate over residues 122 to 135; it reads KVSTTTTTTSSTSK. Residues 140-151 are compositionally biased toward polar residues; sequence QTITKPNKTNET. Residues 268–287 are compositionally biased toward low complexity; sequence SSNNNNNNNNNNNNNNNNSN.

This is an uncharacterized protein from Dictyostelium discoideum (Social amoeba).